Here is a 1064-residue protein sequence, read N- to C-terminus: Serine/threonine protein kinase KIN1 (1064 aa).

The interval 1–113 (MDDYHVNTAF…SSQGMPKQFH (113 aa)) is disordered. Over residues 8–36 (TAFSMGRGNQQDDGNSESNSMHTQPSTMA) the composition is skewed to polar residues. Residues 74–91 (AEQKERQVELEGKSRENA) show a composition bias toward basic and acidic residues. Residues 93 to 108 (KPNTTSQSRVSSSQGM) show a composition bias toward polar residues. Residues 120-398 (WEFVETVGAG…LKQVVEHHWM (279 aa)) enclose the Protein kinase domain. Residues 126–134 (VGAGSMGKV) and K149 contribute to the ATP site. The Proton acceptor role is filled by D269. S534 is modified (phosphoserine). Residues 549–621 (SEPEATLATK…SPTPQGNDYQ (73 aa)) form a disordered region. Over residues 557-571 (TKDTSVPFTPKNSDG) the composition is skewed to polar residues. The residue at position 593 (S593) is a Phosphoserine. A compositionally biased stretch (basic and acidic residues) spans 598–608 (KSSDNQRREME). S646 carries the phosphoserine modification. 5 disordered regions span residues 652-672 (TIEQ…QKTH), 694-714 (MNEP…FPAL), 762-797 (EGSD…HARR), 823-843 (LESS…QTND), and 958-1016 (HESI…GMTT). A compositionally biased stretch (polar residues) spans 654 to 670 (EQTSVNSNNSINKPVQK). S764 carries the phosphoserine modification. A compositionally biased stretch (basic residues) spans 779 to 794 (KGRKLHPSARAKSVGH). 3 stretches are compositionally biased toward polar residues: residues 832–843 (DSLGNVTSQTND), 963–989 (RQGS…SITE), and 998–1016 (GTSL…GMTT). S986 carries the post-translational modification Phosphoserine. Positions 1015-1064 (TTTEKEPIKFEIHIVKVRIVGLAGVHFKKISGNTWLYKELASSILKELKL) constitute a KA1 domain.

This sequence belongs to the protein kinase superfamily. CAMK Ser/Thr protein kinase family. NIM1 subfamily. Interacts with SEC9 and SRO7. Autophosphorylated.

It is found in the cytoplasm. It localises to the cell membrane. It catalyses the reaction L-seryl-[protein] + ATP = O-phospho-L-seryl-[protein] + ADP + H(+). It carries out the reaction L-threonyl-[protein] + ATP = O-phospho-L-threonyl-[protein] + ADP + H(+). Functionally, serine/threonine protein kinase involved in the regulation of exocytosis. Induces phosphorylation of SEC9 and its release from the plasma membrane to the cytosol. In Saccharomyces cerevisiae (strain ATCC 204508 / S288c) (Baker's yeast), this protein is Serine/threonine protein kinase KIN1 (KIN1).